A 151-amino-acid polypeptide reads, in one-letter code: UPF0178 protein RD1_0321 (151 aa).

This sequence belongs to the UPF0178 family.

The sequence is that of UPF0178 protein RD1_0321 from Roseobacter denitrificans (strain ATCC 33942 / OCh 114) (Erythrobacter sp. (strain OCh 114)).